Here is a 329-residue protein sequence, read N- to C-terminus: Probable cell division protein WhiA (329 aa).

A DNA-binding region (H-T-H motif) is located at residues 276–309 (SLEELGKVHEPPLTKDAIAGRIRRLLALADKTAR). The disordered stretch occupies residues 308–329 (ARSNGEPTTLESLPVEMRDDRG). Over residues 309–318 (RSNGEPTTLE) the composition is skewed to polar residues.

Belongs to the WhiA family.

Functionally, involved in cell division and chromosome segregation. The sequence is that of Probable cell division protein WhiA from Cutibacterium acnes (strain DSM 16379 / KPA171202) (Propionibacterium acnes).